A 132-amino-acid polypeptide reads, in one-letter code: Fatty acid-binding protein, adipocyte (132 aa).

The short motif at K22–K32 is the Nuclear localization signal element. 2 residues coordinate (9Z,12Z)-octadecadienoate: R107 and R127.

It belongs to the calycin superfamily. Fatty-acid binding protein (FABP) family. As to quaternary structure, monomer.

It is found in the cytoplasm. Its subcellular location is the nucleus. Functionally, lipid transport protein in adipocytes. Binds both long chain fatty acids and retinoic acid. Delivers long-chain fatty acids and retinoic acid to their cognate receptors in the nucleus. Has the highest binding affinity for linoleic acid and decreasing relative affinity for eicosapentaenoic acid (EPA), alpha-linolenic acid (ALA), docosahexaenoic acid (DHA), oleic acid, palmitic acid and stearic acid, respectively. The protein is Fatty acid-binding protein, adipocyte of Pygoscelis papua (Gentoo penguin).